Here is a 376-residue protein sequence, read N- to C-terminus: Lipoprotein p33 (376 aa).

Residues Met-1–Ser-30 form the signal peptide. The N-palmitoyl cysteine moiety is linked to residue Cys-31. A lipid anchor (S-diacylglycerol cysteine) is attached at Cys-31. The tract at residues Asp-35–Thr-59 is disordered. Residues Gly-38 to Gly-51 show a composition bias toward gly residues.

The protein belongs to the p35 lipoprotein family.

Its subcellular location is the cell membrane. The chain is Lipoprotein p33 from Malacoplasma penetrans (Mycoplasma penetrans).